Reading from the N-terminus, the 3013-residue chain is Genome polyprotein (3013 aa).

Ser2 carries the N-acetylserine; by host modification. The interval 2 to 23 (STLPKPQKRNQRNTNRRPQDVK) is interaction with STAT1. Positions 2–58 (STLPKPQKRNQRNTNRRPQDVKFPGGGQIVGGVYLLPRRGPRLGVRATRKTSERSQP) are interaction with EIF2AK2/PKR. An interaction with DDX3X region spans residues 2–59 (STLPKPQKRNQRNTNRRPQDVKFPGGGQIVGGVYLLPRRGPRLGVRATRKTSERSQPR). Residues 2 to 75 (STLPKPQKRN…PKARRQTGRT (74 aa)) form a disordered region. Residues 2–168 (STLPKPQKRN…EDGINYATGN (167 aa)) lie on the Cytoplasmic side of the membrane. 2 consecutive short sequence motifs (nuclear localization signal) follow at residues 5–13 (PKPQKRNQR) and 38–43 (PRRGPR). Residues 7–16 (PQKRNQRNTN) are compositionally biased toward basic residues. The segment covering 32–47 (GGVYLLPRRGPRLGVR) has biased composition (low complexity). Ser53 carries the phosphoserine; by host modification. Short sequence motifs (nuclear localization signal) lie at residues 58-64 (PRGRRQP) and 66-71 (PKARRQ). Residues 58-72 (PRGRRQPIPKARRQT) show a composition bias toward basic residues. A phosphoserine; by host mark is found at Ser99 and Ser116. An important for endoplasmic reticulum and mitochondrial localization region spans residues 112-152 (PRRRSRNLGKVIDTLTCGFADLMGYIPVVGAPLGGVAAALA). The interaction with APOA2 stretch occupies residues 122 to 173 (VIDTLTCGFADLMGYIPVVGAPLGGVAAALAHGVRAVEDGINYATGNLPGCS). An important for lipid droplets localization region spans residues 164 to 167 (YATG). The chain crosses the membrane as a helical span at residues 169–189 (LPGCSFSIFLLALLSCLTTPA). Residues 178–191 (LLALLSCLTTPASA) constitute a propeptide, ER anchor for the core protein, removed in mature form by host signal peptidase. Residues 190–358 (SAVHYANKSG…TGGHWGILAG (169 aa)) are Lumenal-facing. Residues Asn196, Asn209, Asn234, and Asn250 are each glycosylated (N-linked (GlcNAc...) asparagine; by host). Positions 265-296 (MVGAAAFCSAMYVGDLCGGIFLVGQLFSFNPR) are important for fusion. A glycan (N-linked (GlcNAc...) asparagine; by host) is linked at Asn305. A helical transmembrane segment spans residues 359-379 (ILYYSMVANWAKVLCILFLFA). Topologically, residues 380–723 (GVDATTRTTG…WEYVVLAFLL (344 aa)) are lumenal. The tract at residues 385–412 (TRTTGAQAARATLGFTGLFQTGAKQNIH) is HVR1. N-linked (GlcNAc...) (high mannose) asparagine; by host glycosylation is found at Asn417, Asn423, and Asn430. Disulfide bonds link Cys429/Cys553, Cys452/Cys459, Cys487/Cys495, and Cys504/Cys509. An N-linked (GlcNAc...) asparagine; by host glycan is attached at Asn448. An HVR2 region spans residues 475-479 (ANVSG). N-linked (GlcNAc...) asparagine; by host glycosylation is present at Asn476. Residues 481–494 (SEDRPYCWHYAPRP) form a CD81-binding 1 region. A glycan (N-linked (GlcNAc...) asparagine; by host) is linked at Asn533. Positions 545–552 (PPAGAWYG) are CD81-binding 2. N-linked (GlcNAc...) asparagine; by host glycosylation occurs at Asn557. Disulfide bonds link Cys565–Cys570, Cys579–Cys583, Cys595–Cys618, and Cys605–Cys642. Asn621 and Asn643 each carry an N-linked (GlcNAc...) (high mannose) asparagine; by host glycan. Cysteines 650 and 675 form a disulfide. Residues 658 to 669 (IEMSPLLFSTTE) form a PKR/eIF2-alpha phosphorylation homology domain (PePHD) region. The helical transmembrane segment at 724–744 (LADARICACLWMVLLISQVEA) threads the bilayer. The Lumenal portion of the chain corresponds to 745–755 (ALENLIVLNAA). Residues 756-776 (SAASSQGWIYCLVFICCAWYI) traverse the membrane as a helical segment. Residues 777 to 780 (KGRV) lie on the Cytoplasmic side of the membrane. The helical transmembrane segment at 781–801 (VPGATYAILHLWPLLLLVLAL) threads the bilayer. The Lumenal portion of the chain corresponds to 802–811 (PQRAYAQDRE). Residues 812-832 (QGASIGVVVIAAITIFTLTPA) form a helical membrane-spanning segment. At 833–879 (YKTMLVHFLWWNQYFIARSEALIQQWVPSLRVRGGRDAVILLTCLLH) the chain is on the cytoplasmic side. A helical membrane pass occupies residues 880–900 (PSLGFDITKMLLALLGPLYLL). Residues 901-926 (QVSLLRVPYYVRAHALLRVCILVRRV) lie on the Lumenal side of the membrane. The 124-residue stretch at 901–1024 (QVSLLRVPYY…DMKSMGWRLL (124 aa)) folds into the Peptidase C18 domain. Residues 902 to 1204 (VSLLRVPYYV…PVENMETTMR (303 aa)) are protease NS2-3. Cys920 carries the S-palmitoyl cysteine; by host lipid modification. Residues 927 to 947 (AGGKYIQAALLKLGAWTGTYI) form a helical membrane-spanning segment. The tract at residues 927–947 (AGGKYIQAALLKLGAWTGTYI) is interaction with host SCPS1. The Cytoplasmic segment spans residues 948–1655 (YDHLAPLSTW…CMAADLEVIT (708 aa)). Catalysis depends on for protease NS2 activity; shared with dimeric partner residues His950, Glu970, and Cys991. One can recognise a Peptidase S29 domain in the interval 1025-1206 (APITAYCQQT…ENMETTMRSP (182 aa)). Catalysis depends on charge relay system; for serine protease NS3 activity residues His1081 and Asp1105. Zn(2+) is bound by residues Cys1121 and Cys1123. Catalysis depends on Ser1163, which acts as the Charge relay system; for serine protease NS3 activity. Zn(2+) contacts are provided by Cys1169 and His1173. A Helicase ATP-binding domain is found at 1215–1367 (PAVPQTYQVG…PNITETALPS (153 aa)). ATP is bound at residue 1228–1235 (APTGSGKS). Residues Ser1235 and Glu1315 each coordinate Mg(2+). The DECH box signature appears at 1314-1317 (DECH). A Helicase C-terminal domain is found at 1374–1536 (YGKAIPLECI…ELTPSETTVR (163 aa)). The tract at residues 1484 to 1496 (QRRGRTGRGKPGV) is RNA-binding. A helical transmembrane segment spans residues 1656 to 1676 (STWVLAGGIVAALAAYCLTVG). The segment at 1677–1688 (SVVICGRIVTSG) is NS3-binding. Residues 1677–1803 (SVVICGRIVT…ALTSPLSTST (127 aa)) are Cytoplasmic-facing. Residues 1804–1824 (TLLLNILGGWVASQLAPPTAS) traverse the membrane as a helical segment. Topologically, residues 1825-1826 (TA) are lumenal. A helical membrane pass occupies residues 1827–1847 (FVVSGLAGAAVGSIGLGKVII). Position 1848 (Asp1848) is a topological domain, cytoplasmic. Residues 1849-1869 (ILAGYGAGVSGALVAFKIMSG) traverse the membrane as a helical segment. At 1870-1879 (EAPAVEDMVN) the chain is on the lumenal side. The chain crosses the membrane as a helical span at residues 1880 to 1900 (LLPALLSPGALVVGVVCAAVL). Over 1901–1970 (RRHVGPSEGA…WISGDWSAPC (70 aa)) the chain is Cytoplasmic. Cys1970 carries S-palmitoyl cysteine; by host lipidation. Residues 1971–2000 (SCSWLKDVWDWVCTVLSDFKTWLRAKLVPT) lie within the membrane without spanning it. Topologically, residues 2001–2992 (LPGIPFISCQ…FHSVSRARPR (992 aa)) are cytoplasmic. Cys2009, Cys2027, Cys2029, and Cys2050 together coordinate Zn(2+). The interval 2118-2206 (EFFTEVDGVR…ASSSASQLSA (89 aa)) is FKBP8-binding. Residues 2118 to 2331 (EFFTEVDGVR…PVPPPRKKRV (214 aa)) are transcriptional activation. The tract at residues 2133 to 2137 (PPCRP) is interaction with non-structural protein 4A. The tract at residues 2187 to 2440 (RLARGSPPSL…ALITPCAAEE (254 aa)) is interaction with host SKP2. Phosphoserine; by host is present on residues Ser2192, Ser2195, Ser2199, Ser2202, Ser2205, and Ser2208. An ISDR region spans residues 2208–2247 (SLKATCTTAGKHPDAELIEANLLWRQEVGGNITRVESENK). Positions 2208–2273 (SLKATCTTAG…REISVGAECF (66 aa)) are interaction with EIF2AK2/PKR. The interval 2247 to 2305 (KIIVLDSFDPLIAETDDREISVGAECFNPPRPKFPPALPVWARPDYNPPLLQPWKAPDY) is NS4B-binding. The V3 stretch occupies residues 2298–2376 (QPWKAPDYEP…STLSSDMTPP (79 aa)). A disordered region spans residues 2316–2411 (PPKGLPPVPP…PDLSSGSWST (96 aa)). The SH3-binding signature appears at 2321–2324 (PPVP). Positions 2326–2334 (PRKKRVVQL) match the Nuclear localization signal motif. Residues 2347–2373 (AQTSFPPSTATLSEDSGRETSTLSSDM) are compositionally biased toward polar residues. The segment covering 2375–2385 (PPREEADRASD) has biased composition (basic and acidic residues). Ser2464 bears the Phosphoserine; by host mark. Positions 2636-2754 (PMGFSYDTRC…ISESMGVAED (119 aa)) constitute a RdRp catalytic domain. Residues Asp2642, Asp2740, and Asp2741 each coordinate Mg(2+). A helical transmembrane segment spans residues 2993 to 3013 (NLLLCLLLLTVGVGIFLLPAR).

This sequence belongs to the hepacivirus polyprotein family. In terms of assembly, homooligomer. Interacts with E1 (via C-terminus). Interacts with the non-structural protein 5A. Interacts (via N-terminus) with host STAT1 (via SH2 domain); this interaction results in decreased STAT1 phosphorylation and ubiquitin-mediated proteasome-dependent STAT1 degradation, leading to decreased IFN-stimulated gene transcription. Interacts with host STAT3; this interaction constitutively activates STAT3. Interacts with host LTBR receptor. Interacts with host TNFRSF1A receptor and possibly induces apoptosis. Interacts with host HNRPK. Interacts with host YWHAE. Interacts with host UBE3A/E6AP. Interacts with host DDX3X. Interacts with host APOA2. Interacts with host RXRA protein. Interacts with host SP110 isoform 3/Sp110b; this interaction sequesters the transcriptional corepressor SP110 away from the nucleus. Interacts with host CREB3 nuclear transcription protein; this interaction triggers cell transformation. Interacts with host ACY3. Interacts with host C1QR1. Interacts with host RBM24; this interaction, which enhances the interaction of the mature core protein with 5'-UTR, may inhibit viral translation and favor replication. Interacts with host EIF2AK2/PKR; this interaction induces the autophosphorylation of EIF2AK2. Part of the viral assembly initiation complex composed of NS2, E1, E2, NS3, NS4A, NS5A and the mature core protein. Forms a heterodimer with envelope glycoprotein E2. Interacts with mature core protein. Interacts with protease NS2. The heterodimer E1/E2 interacts with host CLDN1; this interaction plays a role in viral entry into host cell. Interacts with host SPSB2 (via C-terminus). Part of the viral assembly initiation complex composed of NS2, E1, E2, NS3, NS4A, NS5A and the mature core protein. Interacts with host NEURL3; this interaction prevents E1 binding to glycoprotein E2. As to quaternary structure, forms a heterodimer with envelope glycoprotein E1. Interacts with host CD81 and SCARB1 receptors; these interactions play a role in viral entry into host cell. Interacts with host EIF2AK2/PKR; this interaction inhibits EIF2AK2 and probably allows the virus to evade the innate immune response. Interacts with host CD209/DC-SIGN and CLEC4M/DC-SIGNR. Interact with host SPCS1; this interaction is essential for viral particle assembly. Interacts with protease NS2. The heterodimer E1/E2 interacts with host CLDN1; this interaction plays a role in viral entry into host cell. Part of the viral assembly initiation complex composed of NS2, E1, E2, NS3, NS4A, NS5A and the mature core protein. Interacts with host SLC3A2/4F2hc; the interaction may facilitate viral entry into host cell. Interacts with human PLSCR1. In terms of assembly, homohexamer. Homoheptamer. Interacts with protease NS2. Homodimer. Interacts with host SPCS1; this interaction is essential for viral particle assembly. Interacts with envelope glycoprotein E1. Interacts with envelope glycoprotein E2. Interacts with viroporin p7. Interacts with serine protease/helicase NS3. Part of the replication complex composed of NS2, NS3, NS4A, NS4B, NS5A and the RNA-directed RNA polymerase embedded in an ER-derived membranous web. Part of the viral assembly initiation complex composed of NS2, E1, E2, NS3, NS4A, NS5A and the mature core protein. As to quaternary structure, interacts with protease NS2. Interacts with non-structural protein 4A; this interaction stabilizes the folding of NS3 serine protease. NS3-NS4A interaction is essential for NS3 activation and allows membrane anchorage of the latter. NS3/NS4A complex also prevents phosphorylation of host IRF3, thus preventing the establishment of dsRNA induced antiviral state. Interacts with host MAVS; this interaction leads to the cleavage and inhibition of host MAVS. Interacts with host TICAM1; this interaction leads to the cleavage and inhibition of host TICAM1. Interacts with host TANK-binding kinase/TBK1; this interaction results in the inhibition of the association between TBK1 and IRF3, which leads to the inhibition of IRF3 activation. Interacts with host RBM24. Part of the replication complex composed of NS2, NS3, NS4A, NS4B, NS5A and the RNA-directed RNA polymerase embedded in an ER-derived membranous web. Part of the viral assembly initiation complex composed of NS2, E1, E2, NS3, NS4A, NS5A and the mature core protein. In terms of assembly, interacts with NS3 serine protease; this interaction stabilizes the folding of NS3 serine protease. NS3-NS4A interaction is essential for NS3 activation and allows membrane anchorage of the latter. Interacts with non-structural protein 5A (via N-terminus). Part of the replication complex composed of NS2, NS3, NS4A, NS4B, NS5A and the RNA-directed RNA polymerase embedded in an ER-derived membranous web. Part of the viral assembly initiation complex composed of NS2, E1, E2, NS3, NS4A, NS5A and the mature core protein. Homomultimer. Interacts with non-structural protein NS5A. Interacts with host PLA2G4C; this interaction likely initiates the recruitment of replication complexes to lipid droplets. Interacts with host STING; this interaction disrupts the interaction between STING and TBK1 thereby suppressing the interferon signaling. Part of the replication complex composed of NS2, NS3, NS4A, NS4B, NS5A and the RNA-directed RNA polymerase embedded in an ER-derived membranous web. As to quaternary structure, monomer. Homodimer; dimerization is required for RNA-binding. Interacts with the mature core protein. Interacts (via N-terminus) with non-structural protein 4A. Interacts with non-structural protein 4B. Interacts (via region D2) with RNA-directed RNA polymerase. Part of the viral assembly initiation complex composed of NS2, E1, E2, NS3, NS4A, NS5A and the mature core protein. Part of the replication complex composed of NS2, NS3, NS4A, NS4B, NS5A and the RNA-directed RNA polymerase embedded in an ER-derived membranous web. Interacts with host GRB2. Interacts with host BIN1. Interacts with host PIK3R1. Interacts with host SRCAP. Interacts with host FKBP8. Interacts (via C-terminus) with host VAPB (via MSP domain). Interacts with host EIF2AK2/PKR; this interaction leads to disruption of EIF2AK2 dimerization by NS5A and probably allows the virus to evade the innate immune response. Interacts (via N-terminus) with host PACSIN2 (via N-terminus); this interaction attenuates protein kinase C alpha-mediated phosphorylation of PACSIN2 by disrupting the interaction between PACSIN2 and PRKCA. Interacts (via N-terminus) with host SRC kinase (via SH2 domain). Interacts with most Src-family kinases. Interacts with host IFI27 and SKP2; promotes the ubiquitin-mediated proteasomal degradation of NS5A. Interacts with host GPS2. Interacts with host TNFRSF21; this interaction allows the modulation by the virus of JNK, p38 MAPK, STAT3, and Akt signaling pathways in a DR6-dependent manner. Interacts (via N-terminus) with host CIDEB (via N-terminus); this interaction seems to regulate the association of HCV particles with APOE. Interacts with host CHKA/Choline Kinase-alpha; CHKA bridges host PI4KA and NS5A and potentiates NS5A-stimulated PI4KA activity, which then facilitates the targeting of the ternary complex to the ER for viral replication. Interacts with host SPSB2 (via C-terminus); this interaction targets NS5A for ubiquitination and degradation. Interacts with host RAB18; this interaction may promote the association of NS5A and other replicase components with lipid droplets. Interacts (via region D2) with host PPIA/CYPA; the interaction stimulates RNA-binding ability of NS5A and is dependent on the peptidyl-prolyl cis-trans isomerase activity of PPIA/CYPA. Interacts with host TRIM14; this interaction induces the degradation of NS5A. In terms of assembly, homooligomer. Interacts with non-structural protein 5A. Interacts with host VAPB. Interacts with host PRK2/PKN2. Interacts with host HNRNPA1 and SEPT6; these interactions facilitate viral replication. Part of the replication complex composed of NS2, NS3, NS4A, NS4B, NS5A and the RNA-directed RNA polymerase. Zn(2+) is required as a cofactor. The cofactor is Mg(2+). In terms of processing, specific enzymatic cleavages in vivo yield mature proteins. The structural proteins, core, E1, E2 and p7 are produced by proteolytic processing by host signal peptidases. The core protein precursor is synthesized as a 23 kDa, which is retained in the ER membrane through the hydrophobic signal peptide. Cleavage by the signal peptidase releases the 21 kDa mature core protein. The cleavage of the core protein precursor occurs between aminoacids 176 and 188 but the exact cleavage site is not known. Some degraded forms of the core protein appear as well during the course of infection. The other proteins (p7, NS2, NS3, NS4A, NS4B, NS5A and NS5B) are cleaved by the viral proteases. Autoprocessing between NS2 and NS3 is mediated by the NS2 cysteine protease catalytic domain and regulated by the NS3 N-terminal domain. Phosphorylated by host PKC and PKA. Post-translationally, ubiquitinated; mediated by UBE3A and leading to core protein subsequent proteasomal degradation. In terms of processing, highly N-glycosylated. Palmitoylation is required for NS2/3 autoprocessing and E2 recruitment to membranes. Post-translationally, palmitoylated. This modification may play a role in its polymerization or in protein-protein interactions. In terms of processing, phosphorylated on serines in a basal form termed p56. p58 is a hyperphosphorylated form of p56. p56 and p58 coexist in the cell in roughly equivalent amounts. Hyperphosphorylation is dependent on the presence of NS4A. Host CSNK1A1/CKI-alpha or RPS6KB1 kinases may be responsible for NS5A phosphorylation. Tyrosine phosphorylation is essential for the interaction with host SRC. Post-translationally, the N-terminus is phosphorylated by host PRK2/PKN2.

It localises to the host endoplasmic reticulum membrane. It is found in the host mitochondrion membrane. The protein resides in the virion. The protein localises to the host cytoplasm. Its subcellular location is the host nucleus. It localises to the host lipid droplet. It is found in the virion membrane. The protein resides in the host mitochondrion. The protein localises to the host cell membrane. Its subcellular location is the host perinuclear region. The catalysed reaction is Hydrolysis of four peptide bonds in the viral precursor polyprotein, commonly with Asp or Glu in the P6 position, Cys or Thr in P1 and Ser or Ala in P1'.. It catalyses the reaction a ribonucleoside 5'-triphosphate + H2O = a ribonucleoside 5'-diphosphate + phosphate + H(+). It carries out the reaction ATP + H2O = ADP + phosphate + H(+). The enzyme catalyses RNA(n) + a ribonucleoside 5'-triphosphate = RNA(n+1) + diphosphate. Inhibited by the antiviral drug hexamethylene amiloride. Inhibition by amantadine appears to be genotype-dependent. Also inhibited by long-alkyl-chain iminosugar derivatives. With respect to regulation, activity is up-regulated by PRK2/PKN2-mediated phosphorylation. Its function is as follows. Packages viral RNA to form a viral nucleocapsid, and promotes virion budding. Participates in the viral particle production as a result of its interaction with the non-structural protein 5A. Binds RNA and may function as a RNA chaperone to induce the RNA structural rearrangements taking place during virus replication. Modulates viral translation initiation by interacting with viral IRES and 40S ribosomal subunit. Affects various cell signaling pathways, host immunity and lipid metabolism. Prevents the establishment of cellular antiviral state by blocking the interferon-alpha/beta (IFN-alpha/beta) and IFN-gamma signaling pathways and by blocking the formation of phosphorylated STAT1 and promoting ubiquitin-mediated proteasome-dependent degradation of STAT1. Activates STAT3 leading to cellular transformation. Regulates the activity of cellular genes, including c-myc and c-fos. May repress the promoter of p53, and sequester CREB3 and SP110 isoform 3/Sp110b in the cytoplasm. Represses cell cycle negative regulating factor CDKN1A, thereby interrupting an important check point of normal cell cycle regulation. Targets transcription factors involved in the regulation of inflammatory responses and in the immune response: suppresses TNF-induced NF-kappa-B activation, and activates AP-1. Binds to dendritic cells (DCs) via C1QR1, resulting in down-regulation of T-lymphocytes proliferation. Alters lipid metabolism by interacting with hepatocellular proteins involved in lipid accumulation and storage. Induces up-regulation of FAS promoter activity, and thereby contributes to the increased triglyceride accumulation in hepatocytes (steatosis). Functionally, forms a heterodimer with envelope glycoprotein E2, which mediates virus attachment to the host cell, virion internalization through clathrin-dependent endocytosis and fusion with host membrane. Fusion with the host cell is most likely mediated by both E1 and E2, through conformational rearrangements of the heterodimer required for fusion rather than a classical class II fusion mechanism. E1/E2 heterodimer binds host apolipoproteins such as APOB and ApoE thereby forming a lipo-viro-particle (LVP). APOE associated to the LVP allows the initial virus attachment to cell surface receptors such as the heparan sulfate proteoglycans (HSPGs), syndecan-1 (SDC1), syndecan-1 (SDC2), the low-density lipoprotein receptor (LDLR) and scavenger receptor class B type I (SCARB1). The cholesterol transfer activity of SCARB1 allows E2 exposure and binding of E2 to SCARB1 and the tetraspanin CD81. E1/E2 heterodimer binding on CD81 activates the epithelial growth factor receptor (EGFR) signaling pathway. Diffusion of the complex E1-E2-EGFR-SCARB1-CD81 to the cell lateral membrane allows further interaction with Claudin 1 (CLDN1) and occludin (OCLN) to finally trigger HCV entry. Forms a heterodimer with envelope glycoprotein E1, which mediates virus attachment to the host cell, virion internalization through clathrin-dependent endocytosis and fusion with host membrane. Fusion with the host cell is most likely mediated by both E1 and E2, through conformational rearrangements of the heterodimer required for fusion rather than a classical class II fusion mechanism. The interaction between envelope glycoprotein E2 and host apolipoprotein E/APOE allows the proper assembly, maturation and infectivity of the viral particles. This interaction is probably promoted via the up-regulation of cellular autophagy by the virus. E1/E2 heterodimer binds host apolipoproteins such as APOB and APOE thereby forming a lipo-viro-particle (LVP). APOE associated to the LVP allows the initial virus attachment to cell surface receptors such as the heparan sulfate proteoglycans (HSPGs), syndecan-1 (SDC1), syndecan-1 (SDC2), the low-density lipoprotein receptor (LDLR) and scavenger receptor class B type I (SCARB1). The cholesterol transfer activity of SCARB1 allows E2 exposure and binding of E2 to SCARB1 and the tetraspanin CD81. E1/E2 heterodimer binding on CD81 activates the epithelial growth factor receptor (EGFR) signaling pathway. Diffusion of the complex E1-E2-EGFR-SCARB1-CD81 to the cell lateral membrane allows further interaction with Claudin 1 (CLDN1) and occludin (OCLN) to finally trigger HCV entry. Inhibits host EIF2AK2/PKR activation, preventing the establishment of an antiviral state. Viral ligand for CD209/DC-SIGN and CLEC4M/DC-SIGNR, which are respectively found on dendritic cells (DCs), and on liver sinusoidal endothelial cells and macrophage-like cells of lymph node sinuses. These interactions allow the capture of circulating HCV particles by these cells and subsequent facilitated transmission to permissive cells such as hepatocytes and lymphocyte subpopulations. The interaction between E2 and host amino acid transporter complex formed by SLC3A2 and SLC7A5/LAT1 may facilitate viral entry into host cell. In terms of biological role, ion channel protein that acts as a viroporin and plays an essential role in the assembly, envelopment and secretion of viral particles. Regulates the host cell secretory pathway, which induces the intracellular retention of viral glycoproteins and favors assembly of viral particles. Creates a pore in acidic organelles and releases Ca(2+) and H(+) in the cytoplasm of infected cells, leading to a productive viral infection. High levels of cytoplasmic Ca(2+) may trigger membrane trafficking and transport of viral ER-associated proteins to viroplasms, sites of viral genome replication. This ionic imbalance induces the assembly of the inflammasome complex, which triggers the maturation of pro-IL-1beta into IL-1beta through the action of caspase-1. Targets also host mitochondria and induces mitochondrial depolarization. In addition of its role as a viroporin, acts as a lipid raft adhesion factor. Its function is as follows. Cysteine protease required for the proteolytic auto-cleavage between the non-structural proteins NS2 and NS3. The N-terminus of NS3 is required for the function of NS2 protease (active region NS2-3). Promotes the initiation of viral particle assembly by mediating the interaction between structural and non-structural proteins. Functionally, displays three enzymatic activities: serine protease with a chymotrypsin-like fold, NTPase and RNA helicase. NS3 serine protease, in association with NS4A, is responsible for the cleavages of NS3-NS4A, NS4A-NS4B, NS4B-NS5A and NS5A-NS5B. The NS3/NS4A complex prevents phosphorylation of host IRF3, thus preventing the establishment of dsRNA induced antiviral state. The NS3/NS4A complex induces host amino acid transporter component SLC3A2, thus contributing to HCV propagation. NS3 RNA helicase binds to RNA and unwinds both dsDNA and dsRNA in the 3' to 5' direction, and likely resolves RNA complicated stable secondary structures in the template strand. Binds a single ATP and catalyzes the unzipping of a single base pair of dsRNA. Inhibits host antiviral proteins TBK1 and IRF3 thereby preventing the establishment of an antiviral state. Cleaves host MAVS/CARDIF thereby preventing the establishment of an antiviral state. Cleaves host TICAM1/TRIF, thereby disrupting TLR3 signaling and preventing the establishment of an antiviral state. Peptide cofactor which forms a non-covalent complex with the N-terminal of NS3 serine protease. The NS3/NS4A complex prevents phosphorylation of host IRF3, thus preventing the establishment of dsRNA induced antiviral state. The NS3/NS4A complex induces host amino acid transporter component SLC3A2, thus contributing to HCV propagation. In terms of biological role, induces a specific membrane alteration that serves as a scaffold for the virus replication complex. This membrane alteration gives rise to the so-called ER-derived membranous web that contains the replication complex. NS4B self-interaction contributes to its function in membranous web formation. Promotes host TRIF protein degradation in a CASP8-dependent manner thereby inhibiting host TLR3-mediated interferon signaling. Disrupts the interaction between STING and TBK1 contributing to the inhibition of interferon signaling. Its function is as follows. Phosphorylated protein that is indispensable for viral replication and assembly. Both hypo- and hyperphosphorylated states are required for the viral life cycle. The hyperphosphorylated form of NS5A is an inhibitor of viral replication. Involved in RNA-binding and especially in binding to the viral genome. Zinc is essential for RNA-binding. Participates in the viral particle production as a result of its interaction with the mature viral core protein. Its interaction with host VAPB may target the viral replication complex to vesicles. Down-regulates viral IRES translation initiation. Mediates interferon resistance, presumably by interacting with and inhibiting host EIF2AK2/PKR. Prevents BIN1-induced apoptosis. Acts as a transcriptional activator of some host genes important for viral replication when localized in the nucleus. Via the interaction with host PACSIN2, modulates lipid droplet formation in order to promote virion assembly. Modulates TNFRSF21/DR6 signaling pathway for viral propagation. Functionally, RNA-dependent RNA polymerase that performs primer-template recognition and RNA synthesis during viral replication. Initiates RNA transcription/replication at a flavin adenine dinucleotide (FAD), resulting in a 5'- FAD cap on viral RNAs. In this way, recognition of viral 5' RNA by host pattern recognition receptors can be bypassed, thereby evading activation of antiviral pathways. The protein is Genome polyprotein of Hepatitis C virus genotype 6d (isolate VN235) (HCV).